We begin with the raw amino-acid sequence, 802 residues long: Chromosome alignment-maintaining phosphoprotein 1 (802 aa).

N-acetylmethionine is present on methionine 1. Basic and acidic residues predominate over residues 88 to 105; sequence SDKWSEQPKEQPSKDTES. The disordered stretch occupies residues 88 to 475; that stretch reads SDKWSEQPKE…PDLWKSSFIM (388 aa). Serine 108 is subject to Phosphoserine. The span at 135 to 148 shows a compositional bias: polar residues; the sequence is QKTSPSLCPESQAS. Over residues 185–203 the composition is skewed to basic and acidic residues; it reads ERVDPPCELPELEKPERGP. Phosphoserine is present on residues serine 204, serine 207, serine 234, serine 237, serine 243, serine 252, serine 254, serine 265, serine 272, serine 276, serine 298, serine 309, serine 334, serine 345, and serine 365. The interval 261 to 479 is mediates interaction with MAD2L2; sequence ARTASPEPRK…KSSFIMESQK (219 aa). A compositionally biased stretch (pro residues) spans 332–351; it reads PMSPGPWKPIPSVSPGPWKP. Over residues 354–368 the composition is skewed to low complexity; sequence SMSTASWKSSVSSGS. Positions 369–378 are enriched in polar residues; that stretch reads WKTPPTSPES. Threonine 371 is modified (phosphothreonine). Phosphoserine is present on residues serine 375, serine 394, serine 405, serine 416, serine 421, serine 425, serine 432, serine 434, and serine 441. Residues 440-580 form a mediates localization to the spindle and the kinetochore and is required for the attachment of spindle microtubules to the kinetochore region; it reads VSPDQRKTSP…EIQLEAVDNA (141 aa). At threonine 447 the chain carries Phosphothreonine. Phosphoserine occurs at positions 448, 451, and 461. The residue at position 479 (lysine 479) is an N6-acetyllysine; alternate. Lysine 479 is covalently cross-linked (Glycyl lysine isopeptide (Lys-Gly) (interchain with G-Cter in SUMO2); alternate). Phosphoserine occurs at positions 497, 502, and 532. A Glycyl lysine isopeptide (Lys-Gly) (interchain with G-Cter in SUMO2) cross-link involves residue lysine 555. Residues 581–802 form a mediates localization to the chromosome and the spindle and negatively regulates chromosome alignment region; it reads KCDSLAQEGL…LESPLEEQQI (222 aa). Threonine 593 bears the Phosphothreonine mark. Residue lysine 596 forms a Glycyl lysine isopeptide (Lys-Gly) (interchain with G-Cter in SUMO2) linkage. Phosphoserine occurs at positions 603, 605, 617, 622, 641, 642, and 643. The interval 603–625 is disordered; the sequence is SPSSKKLKKDSQENSDAELSSSE. Lysine 660 participates in a covalent cross-link: Glycyl lysine isopeptide (Lys-Gly) (interchain with G-Cter in SUMO2). Serine 665 is subject to Phosphoserine. Residue lysine 679 forms a Glycyl lysine isopeptide (Lys-Gly) (interchain with G-Cter in SUMO2) linkage. A Phosphoserine modification is found at serine 726. The C2H2-type zinc finger occupies 728-750; the sequence is YKCTICGKAFLLESLLKNHVAAH.

As to quaternary structure, interacts with MAD2L2. Interacts with POGZ, CBX1, CBX3 and CBX5. Phosphorylated by CDK1. Mitotic phosphorylation is required for the attachment of spindle microtubules to the kinetochore.

Its subcellular location is the nucleus. The protein resides in the chromosome. It is found in the centromere. It localises to the kinetochore. The protein localises to the cytoplasm. Its subcellular location is the cytoskeleton. The protein resides in the spindle. In terms of biological role, required for proper alignment of chromosomes at metaphase and their accurate segregation during mitosis. Involved in the maintenance of spindle microtubules attachment to the kinetochore during sister chromatid biorientation. May recruit CENPE and CENPF to the kinetochore. The protein is Chromosome alignment-maintaining phosphoprotein 1 (Champ1) of Mus musculus (Mouse).